A 305-amino-acid polypeptide reads, in one-letter code: N-acetylneuraminate lyase A (305 aa).

Residues Thr-51 and Thr-52 each coordinate aceneuramate. Tyr-143 (proton donor) is an active-site residue. Lys-173 acts as the Schiff-base intermediate with substrate in catalysis. Residues Ser-175, Gly-197, Asp-199, Glu-200, and Ser-216 each coordinate aceneuramate.

The protein belongs to the DapA family. NanA subfamily. Homotetramer.

It localises to the cytoplasm. The catalysed reaction is aceneuramate = aldehydo-N-acetyl-D-mannosamine + pyruvate. The protein operates within amino-sugar metabolism; N-acetylneuraminate degradation. Functionally, catalyzes the cleavage of N-acetylneuraminic acid (sialic acid) to form pyruvate and N-acetylmannosamine via a Schiff base intermediate. It prevents sialic acids from being recycled and returning to the cell surface. Involved in the N-glycolylneuraminic acid (Neu5Gc) degradation pathway. The sequence is that of N-acetylneuraminate lyase A (npl-a) from Xenopus laevis (African clawed frog).